Here is a 132-residue protein sequence, read N- to C-terminus: MRHRKSGRKFNRTSAHRKAMFRNMTASLVEHELIKTTLPKAKELRRVAEPLITLAKNDSVANRRLAFSRLRSDAAVAKLFDELGPRYSERPGGYLRILKCGFRAGDNAPMAFVELVGRPLDIEAEEMDDDEE.

This sequence belongs to the bacterial ribosomal protein bL17 family. In terms of assembly, part of the 50S ribosomal subunit. Contacts protein L32.

The chain is Large ribosomal subunit protein bL17 from Marinobacter nauticus (strain ATCC 700491 / DSM 11845 / VT8) (Marinobacter aquaeolei).